The chain runs to 212 residues: Phosphatidylserine decarboxylase proenzyme (212 aa).

Catalysis depends on S182, which acts as the Schiff-base intermediate with substrate; via pyruvic acid. At S182 the chain carries Pyruvic acid (Ser); by autocatalysis.

This sequence belongs to the phosphatidylserine decarboxylase family. PSD-A subfamily. In terms of assembly, heterodimer of a large membrane-associated beta subunit and a small pyruvoyl-containing alpha subunit. Requires pyruvate as cofactor. Post-translationally, is synthesized initially as an inactive proenzyme. Formation of the active enzyme involves a self-maturation process in which the active site pyruvoyl group is generated from an internal serine residue via an autocatalytic post-translational modification. Two non-identical subunits are generated from the proenzyme in this reaction, and the pyruvate is formed at the N-terminus of the alpha chain, which is derived from the carboxyl end of the proenzyme. The post-translation cleavage follows an unusual pathway, termed non-hydrolytic serinolysis, in which the side chain hydroxyl group of the serine supplies its oxygen atom to form the C-terminus of the beta chain, while the remainder of the serine residue undergoes an oxidative deamination to produce ammonia and the pyruvoyl prosthetic group on the alpha chain.

It localises to the cell membrane. The enzyme catalyses a 1,2-diacyl-sn-glycero-3-phospho-L-serine + H(+) = a 1,2-diacyl-sn-glycero-3-phosphoethanolamine + CO2. It functions in the pathway phospholipid metabolism; phosphatidylethanolamine biosynthesis; phosphatidylethanolamine from CDP-diacylglycerol: step 2/2. Catalyzes the formation of phosphatidylethanolamine (PtdEtn) from phosphatidylserine (PtdSer). This Chlorobium phaeobacteroides (strain DSM 266 / SMG 266 / 2430) protein is Phosphatidylserine decarboxylase proenzyme.